The chain runs to 236 residues: Leucyl/phenylalanyl-tRNA--protein transferase (236 aa).

Belongs to the L/F-transferase family.

It is found in the cytoplasm. The catalysed reaction is N-terminal L-lysyl-[protein] + L-leucyl-tRNA(Leu) = N-terminal L-leucyl-L-lysyl-[protein] + tRNA(Leu) + H(+). The enzyme catalyses N-terminal L-arginyl-[protein] + L-leucyl-tRNA(Leu) = N-terminal L-leucyl-L-arginyl-[protein] + tRNA(Leu) + H(+). It catalyses the reaction L-phenylalanyl-tRNA(Phe) + an N-terminal L-alpha-aminoacyl-[protein] = an N-terminal L-phenylalanyl-L-alpha-aminoacyl-[protein] + tRNA(Phe). Its function is as follows. Functions in the N-end rule pathway of protein degradation where it conjugates Leu, Phe and, less efficiently, Met from aminoacyl-tRNAs to the N-termini of proteins containing an N-terminal arginine or lysine. The sequence is that of Leucyl/phenylalanyl-tRNA--protein transferase from Shewanella loihica (strain ATCC BAA-1088 / PV-4).